The following is a 1057-amino-acid chain: RNA cytidine acetyltransferase (1057 aa).

Residues 284-293 and arginine 461 each bind ATP; that span reads GRGKSAALGL. The region spanning 549–682 is the N-acetyltransferase domain; sequence VLLGPIDENN…SKISTVKKDN (134 aa). Acetyl-CoA is bound by residues 621–623 and 628–634; these read IAT and QKMGYGS. The segment covering 654 to 665 has biased composition (acidic residues); sequence VNQEEEEEDEEK. Residues 654 to 675 are disordered; the sequence is VNQEEEEEDEEKVDQNKGSSKI. Lysine 730 is an acetyl-CoA binding site. Positions 1001-1057 are disordered; sequence WSKALKPGSIPNSITIKRKSDENEETDKKENNKKSKTKNNNNNNNNNKKVNNQKSKK. Over residues 1018–1033 the composition is skewed to basic and acidic residues; it reads RKSDENEETDKKENNK. The span at 1038 to 1057 shows a compositional bias: low complexity; it reads KNNNNNNNNNKKVNNQKSKK.

Belongs to the RNA cytidine acetyltransferase family. NAT10 subfamily. In terms of assembly, part of the small subunit (SSU) processome, composed of more than 70 proteins and the RNA chaperone small nucleolar RNA (snoRNA) U3.

The protein localises to the nucleus. The protein resides in the nucleolus. The catalysed reaction is a cytidine in 18S rRNA + acetyl-CoA + ATP + H2O = an N(4)-acetylcytidine in 18S rRNA + ADP + phosphate + CoA + H(+). It catalyses the reaction a cytidine in tRNA + acetyl-CoA + ATP + H2O = an N(4)-acetylcytidine in tRNA + ADP + phosphate + CoA + H(+). Its function is as follows. RNA cytidine acetyltransferase with specificity toward both 18S rRNA and tRNAs. Catalyzes the formation of N(4)-acetylcytidine (ac4C) in 18S rRNA. Required for early nucleolar cleavages of precursor rRNA at sites A0, A1 and A2 during 18S rRNA synthesis. Catalyzes the formation of ac4C in serine and leucine tRNAs. Requires a tRNA-binding adapter protein for full tRNA acetyltransferase activity but not for 18S rRNA acetylation. Part of the small subunit (SSU) processome, first precursor of the small eukaryotic ribosomal subunit. During the assembly of the SSU processome in the nucleolus, many ribosome biogenesis factors, an RNA chaperone and ribosomal proteins associate with the nascent pre-rRNA and work in concert to generate RNA folding, modifications, rearrangements and cleavage as well as targeted degradation of pre-ribosomal RNA by the RNA exosome. The protein is RNA cytidine acetyltransferase (nat10) of Dictyostelium discoideum (Social amoeba).